We begin with the raw amino-acid sequence, 1436 residues long: Antigen WC1.1 (1436 aa).

The first 25 residues, 1–25 (MALGRHLSLRGLCVLLLGTMVGGQA), serve as a signal peptide directing secretion. SRCR domains are found at residues 28–131 (LRLK…VVCS), 134–234 (VRLA…VVCS), and 239–340 (VRLM…VICS). Cystine bridges form between C66–C130 and C97–C107. N162 carries N-linked (GlcNAc...) asparagine glycosylation. 2 cysteine pairs are disulfide-bonded: C172–C233 and C203–C213. N244 and N256 each carry an N-linked (GlcNAc...) asparagine glycan. Intrachain disulfides connect C265/C329, C278/C339, and C309/C319. N-linked (GlcNAc...) asparagine glycans are attached at residues N351, N424, and N444. SRCR domains follow at residues 376-476 (LRLV…VICS), 481-581 (LRMV…IWCA), 586-686 (IRLV…VICS), 689-789 (VRLA…VVCS), and 794-895 (VQLM…VICS). Cystine bridges form between C401-C465, C414-C475, and C445-C455. N499 and N531 each carry an N-linked (GlcNAc...) asparagine glycan. Disulfide bonds link C506/C570, C519/C580, C550/C560, C611/C675, C624/C685, and C655/C665. N717 carries N-linked (GlcNAc...) asparagine glycosylation. 2 cysteine pairs are disulfide-bonded: C727-C788 and C758-C768. The N-linked (GlcNAc...) asparagine glycan is linked to N799. Disulfide bonds link C820–C884, C833–C894, and C864–C874. Residues N897, N979, and N999 are each glycosylated (N-linked (GlcNAc...) asparagine). SRCR domains lie at 931–1031 (LRLV…VICS), 1036–1136 (LRMV…ISCE), and 1155–1255 (LRLR…VRCS). 3 cysteine pairs are disulfide-bonded: C956-C1020, C969-C1030, and C1000-C1010. Residues N1054 and N1086 are each glycosylated (N-linked (GlcNAc...) asparagine). Cystine bridges form between C1061-C1125, C1074-C1135, and C1105-C1115. N-linked (GlcNAc...) asparagine glycosylation is found at N1173 and N1214. Cystine bridges form between C1180–C1244, C1193–C1254, and C1224–C1234. The disordered stretch occupies residues 1337–1410 (EGLGSPDQMT…PGEGEESFWL (74 aa)). Acidic residues predominate over residues 1348–1358 (VPDENYDDAEE). Positions 1384–1393 (RSSQTGSFLN) are enriched in polar residues. Residue N1393 is glycosylated (N-linked (GlcNAc...) asparagine).

As to expression, expressed on subsets of CD4-CD8- gamma delta T lymphocytes.

It is found in the secreted. This chain is Antigen WC1.1, found in Bos taurus (Bovine).